The sequence spans 412 residues: Adenosine receptor A2a (412 aa).

Residues 1–7 are Extracellular-facing; that stretch reads MPTVGSL. The helical transmembrane segment at 8–32 threads the bilayer; it reads VYIMVELAIALLAILGNMLVCWAVW. Residues 33 to 42 are Cytoplasmic-facing; sequence LNSNLQNVTN. Residues 43-66 form a helical membrane-spanning segment; the sequence is YFVVSLAAADIAVGVLAIPFAITI. The Extracellular portion of the chain corresponds to 67-77; it reads STGFCAACHGC. 3 disulfides stabilise this stretch: Cys-71–Cys-159, Cys-74–Cys-146, and Cys-77–Cys-166. A helical membrane pass occupies residues 78–100; it reads LFIACFVLVLTQSSIFSLLAIAI. The Cytoplasmic segment spans residues 101–120; that stretch reads DRYIAIRIPLRYNGLVTGTR. Residues 121-143 traverse the membrane as a helical segment; that stretch reads AKGVIAVCWVLSFAIGLTPMLGW. The Extracellular portion of the chain corresponds to 144 to 173; it reads NNCHHWGEGENQSQGCGEGQVACLFEDVVP. The N-linked (GlcNAc...) asparagine glycan is linked to Asn-154. Position 169 (Glu-169) interacts with adenosine. Residues 174 to 198 form a helical membrane-spanning segment; that stretch reads MNYMVYYNFFACVLVPLLLMLGVYL. Over 199 to 234 the chain is Cytoplasmic; sequence RIFLAARRQLKQMETQPLPGERARSTLQKEVHAAKS. The helical transmembrane segment at 235-258 threads the bilayer; sequence LAIIVGLFALCWLPLHIINCFTFF. Asn-253 lines the adenosine pocket. Cys-259 and Cys-262 are disulfide-bonded. The Extracellular segment spans residues 259-266; sequence CPECPHAP. Residues 267–290 traverse the membrane as a helical segment; sequence LWLMYPAIILSHFNSVVNPFIYAY. Adenosine is bound by residues Ser-277 and His-278. Residues 291-412 are Cytoplasmic-facing; sequence RIREFRHTFH…PLAQDGAGVS (122 aa). The interval 368-412 is disordered; that stretch reads RASARESPGDTGLPDVELLSHELHGASPESPGLEGPLAQDGAGVS.

The protein belongs to the G-protein coupled receptor 1 family. Interacts (via cytoplasmic C-terminal domain) with USP4; the interaction is direct. May interact with DRD4. Interacts with NECAB2. Interacts (via cytoplasmic C-terminal domain) with GAS2L2; interaction enhances receptor-mediated adenylyl cyclase activity. In terms of processing, ubiquitinated. Deubiquitinated by USP4; leading to stabilization and expression at the cell surface.

Its subcellular location is the cell membrane. In terms of biological role, receptor for adenosine. The activity of this receptor is mediated by G proteins which activate adenylyl cyclase. This chain is Adenosine receptor A2a (ADORA2A), found in Equus caballus (Horse).